Reading from the N-terminus, the 470-residue chain is Probable citrate synthase, mitochondrial (470 aa).

Active-site residues include histidine 297, histidine 351, and aspartate 406.

The protein belongs to the citrate synthase family. In terms of assembly, homodimer.

The protein localises to the mitochondrion matrix. The enzyme catalyses oxaloacetate + acetyl-CoA + H2O = citrate + CoA + H(+). The protein operates within carbohydrate metabolism; tricarboxylic acid cycle; isocitrate from oxaloacetate: step 1/2. This Leishmania major protein is Probable citrate synthase, mitochondrial.